The sequence spans 297 residues: uncharacterized protein (297 aa).

Positions 267–297 (NTQHAGKPGAQHRTRRSPPAFRRADRLRQSA) are disordered. The segment covering 288–297 (RRADRLRQSA) has biased composition (basic and acidic residues).

This is an uncharacterized protein from Treponema pallidum (strain Nichols).